The following is a 319-amino-acid chain: ATP-dependent 6-phosphofructokinase (319 aa).

Residue G11 coordinates ATP. 21-25 is an ADP binding site; it reads RAVAR. ATP is bound by residues 72–73 and 102–105; these read RY and GDGS. A Mg(2+)-binding site is contributed by D103. Position 125–127 (125–127) interacts with substrate; it reads TID. The active-site Proton acceptor is D127. Residue R154 participates in ADP binding. Substrate-binding positions include R162 and 169–171; that span reads MGR. Residues 185–187 and R211 each bind ADP; that span reads GAE. Residues E222, R243, and 249-252 contribute to the substrate site; that span reads HIVR.

It belongs to the phosphofructokinase type A (PFKA) family. ATP-dependent PFK group I subfamily. Prokaryotic clade 'B1' sub-subfamily. In terms of assembly, homotetramer. It depends on Mg(2+) as a cofactor.

It localises to the cytoplasm. The enzyme catalyses beta-D-fructose 6-phosphate + ATP = beta-D-fructose 1,6-bisphosphate + ADP + H(+). It functions in the pathway carbohydrate degradation; glycolysis; D-glyceraldehyde 3-phosphate and glycerone phosphate from D-glucose: step 3/4. Allosterically activated by ADP and other diphosphonucleosides, and allosterically inhibited by phosphoenolpyruvate. Catalyzes the phosphorylation of D-fructose 6-phosphate to fructose 1,6-bisphosphate by ATP, the first committing step of glycolysis. This chain is ATP-dependent 6-phosphofructokinase, found in Lacticaseibacillus casei (strain BL23) (Lactobacillus casei).